The primary structure comprises 210 residues: MVCGGFACSRNALCALNVVYMLVGFLLIGVAAWGKGLGVVSSIHIIGGVIAVGVFLLLIAVAGLVGAANHHQVLLFFYMIILGLVFIFQFGISCSCLAINRNTQADVINASWSVLSNSTRHELERSFDCCGLFNLTTLRLQDDTSCSAVCKTKSSTCQMCGERFLKHSDKALKILGGVGLFFSFTEILGVWLAMRFRNQKDPRANPSAFL.

The Cytoplasmic segment spans residues 1 to 12; that stretch reads MVCGGFACSRNA. A helical membrane pass occupies residues 13-33; it reads LCALNVVYMLVGFLLIGVAAW. Residues 34–44 lie on the Extracellular side of the membrane; that stretch reads GKGLGVVSSIH. A helical transmembrane segment spans residues 45-65; sequence IIGGVIAVGVFLLLIAVAGLV. Residues 66-72 lie on the Cytoplasmic side of the membrane; it reads GAANHHQ. The helical transmembrane segment at 73 to 93 threads the bilayer; it reads VLLFFYMIILGLVFIFQFGIS. Topologically, residues 94–173 are extracellular; it reads CSCLAINRNT…FLKHSDKALK (80 aa). Residues asparagine 109, asparagine 117, and asparagine 134 are each glycosylated (N-linked (GlcNAc...) asparagine). A helical membrane pass occupies residues 174-194; it reads ILGGVGLFFSFTEILGVWLAM. The Cytoplasmic portion of the chain corresponds to 195 to 210; the sequence is RFRNQKDPRANPSAFL.

Belongs to the tetraspanin (TM4SF) family.

The protein localises to the membrane. In Mus musculus (Mouse), this protein is Tetraspanin-31 (Tspan31).